A 210-amino-acid polypeptide reads, in one-letter code: Protein GrpE (210 aa).

Residues 1–71 (MSEKDQSVNN…DTKIKELEKL (71 aa)) are disordered. Positions 11 to 23 (TEEDFNVETEDNQ) are enriched in acidic residues. Over residues 24–35 (NDTNIENSVSNT) the composition is skewed to polar residues. The segment covering 36 to 46 (DNSEANASDSE) has biased composition (low complexity). A compositionally biased stretch (acidic residues) spans 47 to 60 (NNSEESIKDEESES). A compositionally biased stretch (basic and acidic residues) spans 61-71 (QDTKIKELEKL).

This sequence belongs to the GrpE family. Homodimer.

The protein localises to the cytoplasm. Functionally, participates actively in the response to hyperosmotic and heat shock by preventing the aggregation of stress-denatured proteins, in association with DnaK and GrpE. It is the nucleotide exchange factor for DnaK and may function as a thermosensor. Unfolded proteins bind initially to DnaJ; upon interaction with the DnaJ-bound protein, DnaK hydrolyzes its bound ATP, resulting in the formation of a stable complex. GrpE releases ADP from DnaK; ATP binding to DnaK triggers the release of the substrate protein, thus completing the reaction cycle. Several rounds of ATP-dependent interactions between DnaJ, DnaK and GrpE are required for fully efficient folding. This Staphylococcus epidermidis (strain ATCC 35984 / DSM 28319 / BCRC 17069 / CCUG 31568 / BM 3577 / RP62A) protein is Protein GrpE.